A 1439-amino-acid chain; its full sequence is Microtubule organization protein AKNA (1439 aa).

2 stretches are compositionally biased toward basic and acidic residues: residues 1–10 and 25–35; these read MASSETEIRW and AWAEDKRDVDR. The disordered stretch occupies residues 1–394; it reads MASSETEIRW…NRKPQAPARP (394 aa). A Phosphoserine modification is found at Ser-52. Residues 71–83 show a composition bias toward basic and acidic residues; that stretch reads WDPHPQPDGHQDS. Acidic residues predominate over residues 89–99; that stretch reads SGEEAEAEDVD. Polar residues predominate over residues 263-275; sequence QDSSAPPAQSPQH. Residues 276–285 are compositionally biased toward basic and acidic residues; sequence ATDRWRRETT. Residues Ser-316, Ser-499, and Ser-534 each carry the phosphoserine modification. 2 disordered regions span residues 507-562 and 659-682; these read SAEW…SAEQ and IDQT…PALP. Low complexity predominate over residues 533 to 544; the sequence is LSPSSLTSMPTL. Ser-767 and Ser-770 each carry phosphoserine. The segment at 771-804 is PEST; that stretch reads LPEAMRMEEEEEGEEEEEEEGGGDSLEVDGVAAT. Disordered stretches follow at residues 775–942 and 977–1005; these read MRME…QTPE and IPRR…LRQR. Residues 778–792 are compositionally biased toward acidic residues; that stretch reads EEEEEGEEEEEEEGG. Ser-848 carries the phosphoserine modification. A compositionally biased stretch (pro residues) spans 865–875; it reads PPGPGVPPHPP. Polar residues-rich tracts occupy residues 879-891, 929-940, and 983-999; these read SAAS…TSLE, SETSRVSPLTQT, and EPST…SSPS. Residue Ser-886 is modified to Phosphoserine. Residues 911 to 932 form a PEST region; the sequence is HLEETWMASPETDSGFVGSETS. Residues Ser-997 and Ser-1010 each carry the phosphoserine modification. A disordered region spans residues 1095–1165; sequence LHQPLQGSPT…RARSSSVPRE (71 aa). Residues 1115–1123 constitute a DNA-binding region (a.T hook); the sequence is RTRGRPADS. The span at 1135–1147 shows a compositional bias: basic and acidic residues; sequence STERLPGEPRGEE. A phosphoserine mark is found at Ser-1172 and Ser-1173. The tract at residues 1180–1211 is disordered; it reads LPLFSEKSKTTKDSPQAARDGKRGVGSAGWPD. Position 1228 is a phosphoserine (Ser-1228). Residues 1252–1329 are disordered; the sequence is AGGAVTGDPL…RPPPGLWYLA (78 aa). Positions 1303-1317 are enriched in polar residues; sequence SSTPSPKQRSKQAGS. Residues Ser-1377, Ser-1387, and Ser-1424 each carry the phosphoserine modification.

The protein belongs to the AKNA family. As to quaternary structure, interacts with DCTN1. Interacts with MAPRE1/EB1. Interacts with ODF2. Interacts with CAMSAP3. In terms of processing, phosphorylated; phosphorylation regulates dissociation from and reassembly at the centrosome. Predominantly expressed by lymphoid tissues. Highly expressed in the spleen, lymph nodes and peripheral blood leukocytes, expressed at lower level in the thymus. Mainly expressed by germinal center B-lymphocytes, a stage in which receptor and ligand interactions are crucial for B-lymphocyte maturation. Expressed by B- and T-lymphocytes, Natural killer cells and CD1a(+)CD14(-) but not CD1a(-)CD14(+) dendritic cells. Weakly or not expressed in fetal liver and in adult bone marrow.

It localises to the cytoplasm. It is found in the cytoskeleton. Its subcellular location is the microtubule organizing center. The protein resides in the centrosome. The protein localises to the centriole. It localises to the nucleus. In terms of biological role, centrosomal protein that plays a key role in cell delamination by regulating microtubule organization. Required for the delamination and retention of neural stem cells from the subventricular zone during neurogenesis. Also regulates the epithelial-to-mesenchymal transition in other epithelial cells. Acts by increasing centrosomal microtubule nucleation and recruiting nucleation factors and minus-end stabilizers, thereby destabilizing microtubules at the adherens junctions and mediating constriction of the apical endfoot. In addition, may also act as a transcription factor that specifically activates the expression of the CD40 receptor and its ligand CD40L/CD154, two cell surface molecules on lymphocytes that are critical for antigen-dependent-B-cell development. Binds to A/T-rich promoters. It is unclear how it can both act as a microtubule organizer and as a transcription factor; additional evidences are required to reconcile these two apparently contradictory functions. This is Microtubule organization protein AKNA from Homo sapiens (Human).